A 490-amino-acid chain; its full sequence is Polyamine oxidase 2 (490 aa).

Residues glutamate 57, arginine 65, valine 246, and glutamate 433 each coordinate FAD. The Microbody targeting signal signature appears at 488-490 (SRL).

It belongs to the flavin monoamine oxidase family. Requires FAD as cofactor. As to expression, highly expressed in flowers and siliques. Also found in leaf and stem and in low levels in cotyledons, roots and in seedlings.

It localises to the peroxisome. It catalyses the reaction spermine + O2 + H2O = 3-aminopropanal + spermidine + H2O2. The enzyme catalyses N(1)-acetylspermine + O2 + H2O = 3-acetamidopropanal + spermidine + H2O2. The catalysed reaction is spermidine + O2 + H2O = 3-aminopropanal + putrescine + H2O2. It participates in amine and polyamine degradation; spermine degradation. The protein operates within amine and polyamine degradation; spermidine degradation. Flavoenzyme involved in polyamine back-conversion. Catalyzes the oxidation of the secondary amino group of polyamines, such as spermine, spermidine and their acetyl derivatives. Substrate preference is N(1)-acetylspermine &gt; spermine &gt; spermidine. Plays an important role in the regulation of polyamine intracellular concentration. Involved in abscisic acid-mediated developmental processes. May contribute to nitric oxide-mediated effects on root growth. The protein is Polyamine oxidase 2 of Arabidopsis thaliana (Mouse-ear cress).